The chain runs to 38 residues: Potassium channel toxin alpha-KTx 3.17 (38 aa).

Disulfide bonds link C8–C28, C14–C33, and C18–C35.

Belongs to the short scorpion toxin superfamily. Potassium channel inhibitor family. Alpha-KTx 03 subfamily. As to expression, expressed by the venom gland.

Its subcellular location is the secreted. Functionally, completely inhibits the (125)I-kaliotoxin binding on rat brain synaptosomes with high-affinity (IC(50)=0.1 nM). Is a potent Kv1.3/KCNA3 ligand. The sequence is that of Potassium channel toxin alpha-KTx 3.17 from Buthus paris (Scorpion).